The following is a 261-amino-acid chain: MFDIGVNLTSTQFAKDRDQVVKRAKDAGITGLLITGTNALESQQAQSLATRRPGYCWSTAGVHPHHASEWSGETAATLKRLAESPEVVAIGECGLDFNRNISEPEQQVYAFNAQLELAAELAMPVFLHCRDAHDRFLAVLTPWLPTLPGAVVHCFTGTREELEACLAAGLSIGITGWVCDERRGVELRELMPLIPADRLLLETDAPYLLPRDMRPRPPSRRNEPCFLPHIVQVVAGLRGEEPEALGRQCDANARKLFRLPA.

Positions 92, 128, and 153 each coordinate a divalent metal cation.

It belongs to the metallo-dependent hydrolases superfamily. TatD-type hydrolase family. TatD subfamily. In terms of assembly, monomer. Mg(2+) serves as cofactor.

It localises to the cytoplasm. Its function is as follows. 3'-5' exonuclease that prefers single-stranded DNA and RNA. May play a role in the H(2)O(2)-induced DNA damage repair. The sequence is that of 3'-5' ssDNA/RNA exonuclease TatD from Erwinia billingiae (strain Eb661).